The primary structure comprises 727 residues: Elongation factor 2 (727 aa).

A tr-type G domain is found at 19 to 260 (DQIRNMGICA…MAIKHLPNPL (242 aa)). Residues 28-35 (AHIDHGKT), 94-98 (DTPGH), and 148-151 (NKVD) each bind GTP. His-603 is subject to Diphthamide.

This sequence belongs to the TRAFAC class translation factor GTPase superfamily. Classic translation factor GTPase family. EF-G/EF-2 subfamily.

The protein resides in the cytoplasm. In terms of biological role, catalyzes the GTP-dependent ribosomal translocation step during translation elongation. During this step, the ribosome changes from the pre-translocational (PRE) to the post-translocational (POST) state as the newly formed A-site-bound peptidyl-tRNA and P-site-bound deacylated tRNA move to the P and E sites, respectively. Catalyzes the coordinated movement of the two tRNA molecules, the mRNA and conformational changes in the ribosome. The sequence is that of Elongation factor 2 (fusA) from Methanococcus vannielii (strain ATCC 35089 / DSM 1224 / JCM 13029 / OCM 148 / SB).